Consider the following 411-residue polypeptide: Serine/threonine transporter SstT (411 aa).

A run of 8 helical transmembrane segments spans residues 17 to 37 (IMVGLVAGIIVALVSPATASA), 41 to 61 (LGALFVGALKAVAPVLVLVLV), 79 to 99 (ILFLYLLGTFAAALVAVVVSF), 138 to 158 (ALISANYIGILAWAVGLGLAL), 189 to 209 (LGIFGLVASTLAETGFGALWG), 214 to 234 (LVVLIGCMLLVALVLNPLIVF), 295 to 315 (MAGAAITITVLTLAAVHTLGI), and 327 to 347 (VVAAVCACGASGVAGGSLLLI).

Belongs to the dicarboxylate/amino acid:cation symporter (DAACS) (TC 2.A.23) family.

Its subcellular location is the cell inner membrane. It catalyses the reaction L-serine(in) + Na(+)(in) = L-serine(out) + Na(+)(out). It carries out the reaction L-threonine(in) + Na(+)(in) = L-threonine(out) + Na(+)(out). Its function is as follows. Involved in the import of serine and threonine into the cell, with the concomitant import of sodium (symport system). The polypeptide is Serine/threonine transporter SstT (Serratia proteamaculans (strain 568)).